We begin with the raw amino-acid sequence, 227 residues long: Fibrillarin-like rRNA/tRNA 2'-O-methyltransferase (227 aa).

S-adenosyl-L-methionine-binding positions include 86–87 (TT), 105–106 (EF), 130–131 (DA), and 150–153 (DVAQ).

This sequence belongs to the methyltransferase superfamily. Fibrillarin family. Interacts with nop5. Component of box C/D small ribonucleoprotein (sRNP) particles that contain rpl7ae, FlpA and nop5, plus a guide RNA.

Its function is as follows. Involved in pre-rRNA and tRNA processing. Utilizes the methyl donor S-adenosyl-L-methionine to catalyze the site-specific 2'-hydroxyl methylation of ribose moieties in rRNA and tRNA. Site specificity is provided by a guide RNA that base pairs with the substrate. Methylation occurs at a characteristic distance from the sequence involved in base pairing with the guide RNA. The sequence is that of Fibrillarin-like rRNA/tRNA 2'-O-methyltransferase from Pyrococcus abyssi (strain GE5 / Orsay).